The sequence spans 452 residues: UPF0210 protein PTH_0987 (452 aa).

This sequence belongs to the UPF0210 family. In terms of assembly, homodimer.

The protein is UPF0210 protein PTH_0987 of Pelotomaculum thermopropionicum (strain DSM 13744 / JCM 10971 / SI).